The following is a 211-amino-acid chain: MAPSRNGMILKPHFHKDWQQRVDTWFNQPARKIRRRKARQAKARRIAPRPASGPIRPIVRCPTVRYHTKVRAGRGFSLEELRVAGIHKKMARTIGISVDPRRRNKSTESLQANVQRLKEYRSKLILFPRKPSAPKKGDSSAEELKLATQLTGPVMPIRNVYKKEKARAITEEEKNFKAFASLRMARANARLFGIRAKRAKEAAEQDVEKKK.

N6-acetyllysine is present on Lys-16. Phosphoserine occurs at positions 52, 77, and 106. Glycyl lysine isopeptide (Lys-Gly) (interchain with G-Cter in SUMO2) cross-links involve residues Lys-123 and Lys-145. Lys-174 is covalently cross-linked (Glycyl lysine isopeptide (Lys-Gly) (interchain with G-Cter in SUMO1); alternate). Glycyl lysine isopeptide (Lys-Gly) (interchain with G-Cter in SUMO2); alternate cross-links involve residues Lys-174 and Lys-177. The residue at position 177 (Lys-177) is an N6-acetyllysine; alternate.

It belongs to the eukaryotic ribosomal protein eL13 family. In terms of assembly, component of the 60S large ribosomal subunit (LSU).

The protein localises to the cytoplasm. Functionally, component of the ribosome, a large ribonucleoprotein complex responsible for the synthesis of proteins in the cell. The small ribosomal subunit (SSU) binds messenger RNAs (mRNAs) and translates the encoded message by selecting cognate aminoacyl-transfer RNA (tRNA) molecules. The large subunit (LSU) contains the ribosomal catalytic site termed the peptidyl transferase center (PTC), which catalyzes the formation of peptide bonds, thereby polymerizing the amino acids delivered by tRNAs into a polypeptide chain. The nascent polypeptides leave the ribosome through a tunnel in the LSU and interact with protein factors that function in enzymatic processing, targeting, and the membrane insertion of nascent chains at the exit of the ribosomal tunnel. As part of the LSU, it is probably required for its formation and the maturation of rRNAs. Plays a role in bone development. This is Large ribosomal subunit protein eL13 (Rpl13) from Rattus norvegicus (Rat).